Reading from the N-terminus, the 445-residue chain is uncharacterized protein (445 aa).

Position 66 (His66) interacts with Zn(2+). Catalysis depends on Glu69, which acts as the Proton acceptor. His70 and Glu146 together coordinate Zn(2+). Residues Gly232 to Leu251 are disordered.

It belongs to the peptidase M16 family. It depends on Zn(2+) as a cofactor.

This is an uncharacterized protein from Mycobacterium leprae (strain TN).